A 345-amino-acid chain; its full sequence is 1-aminocyclopropane-1-carboxylate oxidase homolog 7 (345 aa).

Residue K16 forms a Glycyl lysine isopeptide (Lys-Gly) (interchain with G-Cter in ubiquitin) linkage. Residues 194 to 293 (KGLHMICHYY…RISIACFFSS (100 aa)) enclose the Fe2OG dioxygenase domain. 3 residues coordinate Fe cation: H218, D220, and H274. Residue R284 coordinates 2-oxoglutarate.

It belongs to the iron/ascorbate-dependent oxidoreductase family. Fe(2+) is required as a cofactor.

The protein is 1-aminocyclopropane-1-carboxylate oxidase homolog 7 of Arabidopsis thaliana (Mouse-ear cress).